The chain runs to 259 residues: Dihydroorotate dehydrogenase B (NAD(+)), electron transfer subunit (259 aa).

The FAD-binding FR-type domain occupies 3-103 (KKQGRLTIVK…LGPLGQGFPL (101 aa)). Residues 54–57 (RPIS), 71–73 (IYR), and 78–79 (GT) contribute to the FAD site. [2Fe-2S] cluster contacts are provided by C222, C227, C230, and C246.

It belongs to the PyrK family. In terms of assembly, heterotetramer of 2 PyrK and 2 PyrD type B subunits. Requires [2Fe-2S] cluster as cofactor. FAD serves as cofactor.

Its pathway is pyrimidine metabolism; UMP biosynthesis via de novo pathway; orotate from (S)-dihydroorotate (NAD(+) route): step 1/1. Its function is as follows. Responsible for channeling the electrons from the oxidation of dihydroorotate from the FMN redox center in the PyrD type B subunit to the ultimate electron acceptor NAD(+). The polypeptide is Dihydroorotate dehydrogenase B (NAD(+)), electron transfer subunit (Shouchella clausii (strain KSM-K16) (Alkalihalobacillus clausii)).